Consider the following 930-residue polypeptide: Xanthan lyase (930 aa).

An N-terminal signal peptide occupies residues 1 to 25 (MLSGILIAALLMTLWGGWQPDIAHA). Residues 146–148 (NWW), His-246, Tyr-255, Arg-309, 313–315 (RSY), and Asn-424 contribute to the xanthan site. Tyr-255 serves as the catalytic Proton donor/acceptor. Ca(2+) contacts are provided by Asp-515, Asp-516, and Glu-517. Arg-612 serves as a coordination point for xanthan. Glu-676 is a binding site for Ca(2+).

It belongs to the polysaccharide lyase 8 family. As to quaternary structure, monomer.

It is found in the secreted. It carries out the reaction Eliminative cleavage of the terminal beta-D-mannosyl-(1-&gt;4)-beta-D-glucuronosyl linkage of the side-chain of the polysaccharide xanthan, leaving a 4-deoxy-alpha-L-threo-hex-4-enuronosyl group at the terminus of the side-chain.. Activated by Co(2+) at 1 mM. Completely inhibited by Hg(2+) but not affected by other divalent cations. Intensely inhibited by NaCl and KCl at 150 mM, in particular by the Na(+) and K(+) ions but not the Cl(-) ions. Partially inhibited by iodoacetamide and N-ethylmaleimide at 1 mM but not by dithiothreitol, reduced glutathione or 2-mercaptoethanol. Functionally, plays a role in xanthan depolymerization pathway by cleaving the linkage between the terminal mannosyl and glucuronyl residues of the side chain of xanthan to liberate pyruvylated mannose. Is highly specific for pyruvylated side-chains of xanthan and is not effective with hyaluronate, chondroitin A, gellan, heparin or pectin. The sequence is that of Xanthan lyase from Bacillus sp. (strain GL1).